The chain runs to 345 residues: Biotin synthase (345 aa).

The Radical SAM core domain maps to 38–256; that stretch reads RQVQVSTLLS…IAVARIMMPS (219 aa). [4Fe-4S] cluster contacts are provided by Cys-53, Cys-57, and Cys-60. Residues Cys-97, Cys-128, Cys-188, and Arg-260 each coordinate [2Fe-2S] cluster.

Belongs to the radical SAM superfamily. Biotin synthase family. In terms of assembly, homodimer. [4Fe-4S] cluster is required as a cofactor. [2Fe-2S] cluster serves as cofactor.

The enzyme catalyses (4R,5S)-dethiobiotin + (sulfur carrier)-SH + 2 reduced [2Fe-2S]-[ferredoxin] + 2 S-adenosyl-L-methionine = (sulfur carrier)-H + biotin + 2 5'-deoxyadenosine + 2 L-methionine + 2 oxidized [2Fe-2S]-[ferredoxin]. It participates in cofactor biosynthesis; biotin biosynthesis; biotin from 7,8-diaminononanoate: step 2/2. Functionally, catalyzes the conversion of dethiobiotin (DTB) to biotin by the insertion of a sulfur atom into dethiobiotin via a radical-based mechanism. The chain is Biotin synthase from Yersinia pestis bv. Antiqua (strain Antiqua).